We begin with the raw amino-acid sequence, 548 residues long: Chaperonin GroEL (548 aa).

Residues 30 to 33 (TLGP), Lys51, 87 to 91 (DGTTT), Gly415, 479 to 481 (NAA), and Asp495 contribute to the ATP site.

It belongs to the chaperonin (HSP60) family. As to quaternary structure, forms a cylinder of 14 subunits composed of two heptameric rings stacked back-to-back. Interacts with the co-chaperonin GroES.

It localises to the cytoplasm. It catalyses the reaction ATP + H2O + a folded polypeptide = ADP + phosphate + an unfolded polypeptide.. Together with its co-chaperonin GroES, plays an essential role in assisting protein folding. The GroEL-GroES system forms a nano-cage that allows encapsulation of the non-native substrate proteins and provides a physical environment optimized to promote and accelerate protein folding. The sequence is that of Chaperonin GroEL from Pseudomonas fluorescens (strain Pf0-1).